A 281-amino-acid chain; its full sequence is 2,3,4,5-tetrahydropyridine-2,6-dicarboxylate N-succinyltransferase (281 aa).

Residues Arg108 and Asp145 each coordinate substrate.

Belongs to the transferase hexapeptide repeat family. As to quaternary structure, homotrimer.

The protein localises to the cytoplasm. It catalyses the reaction (S)-2,3,4,5-tetrahydrodipicolinate + succinyl-CoA + H2O = (S)-2-succinylamino-6-oxoheptanedioate + CoA. It functions in the pathway amino-acid biosynthesis; L-lysine biosynthesis via DAP pathway; LL-2,6-diaminopimelate from (S)-tetrahydrodipicolinate (succinylase route): step 1/3. This chain is 2,3,4,5-tetrahydropyridine-2,6-dicarboxylate N-succinyltransferase, found in Methylobacterium nodulans (strain LMG 21967 / CNCM I-2342 / ORS 2060).